A 365-amino-acid polypeptide reads, in one-letter code: UPF0283 membrane protein Avi_2471 (365 aa).

Residues 1-10 (MSKAPEDQRP) are compositionally biased toward basic and acidic residues. The segment at 1–47 (MSKAPEDQRPMPRRPAAFSLEEPSSSPARPPFAEAQEPQRRAPKSFD) is disordered. Helical transmembrane passes span 83–103 (FGKL…GLWI) and 117–137 (LGYT…VVVI).

It belongs to the UPF0283 family.

It is found in the cell inner membrane. The polypeptide is UPF0283 membrane protein Avi_2471 (Allorhizobium ampelinum (strain ATCC BAA-846 / DSM 112012 / S4) (Agrobacterium vitis (strain S4))).